The chain runs to 166 residues: 2-amino-4-hydroxy-6-hydroxymethyldihydropteridine pyrophosphokinase (166 aa).

The protein belongs to the HPPK family.

It carries out the reaction 6-hydroxymethyl-7,8-dihydropterin + ATP = (7,8-dihydropterin-6-yl)methyl diphosphate + AMP + H(+). It participates in cofactor biosynthesis; tetrahydrofolate biosynthesis; 2-amino-4-hydroxy-6-hydroxymethyl-7,8-dihydropteridine diphosphate from 7,8-dihydroneopterin triphosphate: step 4/4. Functionally, catalyzes the transfer of pyrophosphate from adenosine triphosphate (ATP) to 6-hydroxymethyl-7,8-dihydropterin, an enzymatic step in folate biosynthesis pathway. In Streptococcus pyogenes serotype M18 (strain MGAS8232), this protein is 2-amino-4-hydroxy-6-hydroxymethyldihydropteridine pyrophosphokinase (folK).